The following is a 343-amino-acid chain: Phosphate acyltransferase (343 aa).

It belongs to the PlsX family. Homodimer. Probably interacts with PlsY.

The protein localises to the cytoplasm. It carries out the reaction a fatty acyl-[ACP] + phosphate = an acyl phosphate + holo-[ACP]. Its pathway is lipid metabolism; phospholipid metabolism. In terms of biological role, catalyzes the reversible formation of acyl-phosphate (acyl-PO(4)) from acyl-[acyl-carrier-protein] (acyl-ACP). This enzyme utilizes acyl-ACP as fatty acyl donor, but not acyl-CoA. The protein is Phosphate acyltransferase of Coxiella burnetii (strain Dugway 5J108-111).